Consider the following 497-residue polypeptide: Aspartyl/glutamyl-tRNA(Asn/Gln) amidotransferase subunit B (497 aa).

The protein belongs to the GatB/GatE family. GatB subfamily. As to quaternary structure, heterotrimer of A, B and C subunits.

The catalysed reaction is L-glutamyl-tRNA(Gln) + L-glutamine + ATP + H2O = L-glutaminyl-tRNA(Gln) + L-glutamate + ADP + phosphate + H(+). It carries out the reaction L-aspartyl-tRNA(Asn) + L-glutamine + ATP + H2O = L-asparaginyl-tRNA(Asn) + L-glutamate + ADP + phosphate + 2 H(+). Functionally, allows the formation of correctly charged Asn-tRNA(Asn) or Gln-tRNA(Gln) through the transamidation of misacylated Asp-tRNA(Asn) or Glu-tRNA(Gln) in organisms which lack either or both of asparaginyl-tRNA or glutaminyl-tRNA synthetases. The reaction takes place in the presence of glutamine and ATP through an activated phospho-Asp-tRNA(Asn) or phospho-Glu-tRNA(Gln). This is Aspartyl/glutamyl-tRNA(Asn/Gln) amidotransferase subunit B from Nocardioides sp. (strain ATCC BAA-499 / JS614).